Here is a 1066-residue protein sequence, read N- to C-terminus: DNA-directed RNA polymerase subunit beta (1066 aa).

The protein belongs to the RNA polymerase beta chain family. In terms of assembly, in plastids the minimal PEP RNA polymerase catalytic core is composed of four subunits: alpha, beta, beta', and beta''. When a (nuclear-encoded) sigma factor is associated with the core the holoenzyme is formed, which can initiate transcription.

The protein resides in the plastid. The protein localises to the chloroplast. It carries out the reaction RNA(n) + a ribonucleoside 5'-triphosphate = RNA(n+1) + diphosphate. In terms of biological role, DNA-dependent RNA polymerase catalyzes the transcription of DNA into RNA using the four ribonucleoside triphosphates as substrates. The protein is DNA-directed RNA polymerase subunit beta of Coffea arabica (Arabian coffee).